A 430-amino-acid polypeptide reads, in one-letter code: Adenylosuccinate synthetase (430 aa).

GTP-binding positions include 12-18 (GDEGKGK) and 40-42 (GHT). Asp13 functions as the Proton acceptor in the catalytic mechanism. The Mg(2+) site is built by Asp13 and Gly40. IMP contacts are provided by residues 13-16 (DEGK), 38-41 (NAGH), Thr128, Arg142, Gln223, Thr238, and Arg302. The Proton donor role is filled by His41. 298-304 (TTTGRPR) contacts substrate. GTP contacts are provided by residues Arg304, 330–332 (SID), and 413–415 (SVG).

Belongs to the adenylosuccinate synthetase family. In terms of assembly, homodimer. It depends on Mg(2+) as a cofactor.

The protein resides in the cytoplasm. The catalysed reaction is IMP + L-aspartate + GTP = N(6)-(1,2-dicarboxyethyl)-AMP + GDP + phosphate + 2 H(+). It functions in the pathway purine metabolism; AMP biosynthesis via de novo pathway; AMP from IMP: step 1/2. Functionally, plays an important role in the de novo pathway of purine nucleotide biosynthesis. Catalyzes the first committed step in the biosynthesis of AMP from IMP. In Lactococcus lactis subsp. cremoris (strain MG1363), this protein is Adenylosuccinate synthetase.